We begin with the raw amino-acid sequence, 142 residues long: Baculoviral IAP repeat-containing protein 5 (142 aa).

Residues 18-88 (RVSTFKNWPF…KHSSGCAFLS (71 aa)) form a BIR repeat. The residue at position 20 (Ser20) is a Phosphoserine; by AURKC. Lys23 bears the N6-acetyllysine mark. Thr34 bears the Phosphothreonine; by CDK1 and CDK15 mark. Thr48 is subject to Phosphothreonine. Cys57, Cys60, His77, and Cys84 together coordinate Zn(2+). N6-acetyllysine is present on residues Lys90, Lys110, Lys112, and Lys115. Thr117 carries the post-translational modification Phosphothreonine; by AURKB. At Lys129 the chain carries N6-acetyllysine.

This sequence belongs to the IAP family. In terms of assembly, monomer or homodimer. Exists as a homodimer in the apo state and as a monomer in the CPC-bound state. The monomer protects cells against apoptosis more efficiently than the dimer. Only the dimeric form is capable of enhancing tubulin stability in cells. When phosphorylated, interacts with LAMTOR5/HBXIP; the resulting complex binds pro-CASP9, as well as active CASP9, but much less efficiently. Component of the chromosomal passenger complex (CPC) composed of at least BIRC5/survivin, CDCA8/borealin, INCENP, AURKB or AURKC; in the complex forms a triple-helix bundle-based subcomplex with INCENP and CDCA8. Interacts with JTB. Interacts (via BIR domain) with histone H3 phosphorylated at 'Thr-3' (H3pT3). Interacts with EVI5. Interacts with GTP-bound RAN in both the S and M phases of the cell cycle. Interacts with USP9X. Interacts with tubulin. Interacts with BIRC2/c-IAP1. The acetylated form at Lys-129 interacts with STAT3. The monomeric form deacetylated at Lys-129 interacts with XPO1/CRM1. The monomeric form interacts with XIAP/BIRC4. Both the dimeric and monomeric form can interact with DIABLO/SMAC. Interacts with BIRC6/bruce. Interacts with FBXL7; this interaction facilitates the polyubiquitination and subsequent proteasomal degradation of BIRC5 by the SCF(FBXL7) E3 ubiquitin-protein ligase complex. In terms of processing, ubiquitinated by the Cul9-RING ubiquitin-protein ligase complex, leading to its degradation. Ubiquitination is required for centrosomal targeting. Deubiquitinated by USP35 or USP38; leading to stabilization. Post-translationally, acetylation at Lys-129 results in its homodimerization, while deacetylation promotes the formation of monomers which heterodimerize with XPO1/CRM1 which facilitates its nuclear export. The acetylated form represses STAT3 transactivation. The dynamic equilibrium between its acetylation and deacetylation at Lys-129 determines its interaction with XPO1/CRM1, its subsequent subcellular localization, and its ability to inhibit STAT3 transactivation. In vitro phosphorylation at Thr-117 by AURKB prevents interaction with INCENP and localization to mitotic chromosomes. Phosphorylation at Thr-48 by CK2 is critical for its mitotic and anti-apoptotic activities. Phosphorylation at Thr-34 by CDK15 is critical for its anti-apoptotic activity. Phosphorylation at Ser-20 by AURKC is critical for regulation of proper chromosome alignment and segregation, and possibly cytokinesis.

The protein localises to the cytoplasm. Its subcellular location is the nucleus. The protein resides in the chromosome. It localises to the centromere. It is found in the cytoskeleton. The protein localises to the spindle. Its subcellular location is the kinetochore. The protein resides in the midbody. Multitasking protein that has dual roles in promoting cell proliferation and preventing apoptosis. Component of a chromosome passage protein complex (CPC) which is essential for chromosome alignment and segregation during mitosis and cytokinesis. Acts as an important regulator of the localization of this complex; directs CPC movement to different locations from the inner centromere during prometaphase to midbody during cytokinesis and participates in the organization of the center spindle by associating with polymerized microtubules. Involved in the recruitment of CPC to centromeres during early mitosis via association with histone H3 phosphorylated at 'Thr-3' (H3pT3) during mitosis. The complex with RAN plays a role in mitotic spindle formation by serving as a physical scaffold to help deliver the RAN effector molecule TPX2 to microtubules. May counteract a default induction of apoptosis in G2/M phase. The acetylated form represses STAT3 transactivation of target gene promoters. May play a role in neoplasia. Inhibitor of CASP3 and CASP7. Essential for the maintenance of mitochondrial integrity and function. This is Baculoviral IAP repeat-containing protein 5 (BIRC5) from Bos taurus (Bovine).